A 573-amino-acid polypeptide reads, in one-letter code: Septation ring formation regulator EzrA (573 aa).

Over 1-2 the chain is Extracellular; it reads MQ. A helical membrane pass occupies residues 3–21; the sequence is VAIGIVVVAIVIYAAVKGF. At 22–573 the chain is on the cytoplasmic side; that stretch reads QFYIDKQVRQ…KQADKMNDEA (552 aa). 3 coiled-coil regions span residues 100 to 188, 317 to 364, and 416 to 488; these read DAQQ…LAKA, LTHA…VYQA, and ETLQ…TLKE.

The protein belongs to the EzrA family.

It localises to the cell membrane. Negative regulator of FtsZ ring formation; modulates the frequency and position of FtsZ ring formation. Inhibits FtsZ ring formation at polar sites. Interacts either with FtsZ or with one of its binding partners to promote depolymerization. This chain is Septation ring formation regulator EzrA, found in Lactiplantibacillus plantarum (strain ATCC BAA-793 / NCIMB 8826 / WCFS1) (Lactobacillus plantarum).